We begin with the raw amino-acid sequence, 248 residues long: Small ribosomal subunit protein uS2 (248 aa).

Belongs to the universal ribosomal protein uS2 family.

The sequence is that of Small ribosomal subunit protein uS2 from Dechloromonas aromatica (strain RCB).